The following is a 177-amino-acid chain: Olfactory protein (177 aa).

The N-terminal stretch at 1-17 (MIRIIAIVVLFFLQCQA) is a signal peptide. Residues Cys-81 and Cys-174 are joined by a disulfide bond.

It belongs to the calycin superfamily. Lipocalin family. As to expression, synthesized in Bowman glands, which secrete the mucus that bathes the cilia of the olfactory neuroepithelium.

The protein resides in the secreted. In Lithobates pipiens (Northern leopard frog), this protein is Olfactory protein.